Reading from the N-terminus, the 282-residue chain is Elongation factor Ts (282 aa).

Residues 80–83 form an involved in Mg(2+) ion dislocation from EF-Tu region; it reads TDFV.

This sequence belongs to the EF-Ts family.

It is found in the cytoplasm. Associates with the EF-Tu.GDP complex and induces the exchange of GDP to GTP. It remains bound to the aminoacyl-tRNA.EF-Tu.GTP complex up to the GTP hydrolysis stage on the ribosome. This Chlamydia pneumoniae (Chlamydophila pneumoniae) protein is Elongation factor Ts (tsf).